The following is a 218-amino-acid chain: Ribosomal RNA small subunit methyltransferase J (218 aa).

Residues 55-56, 71-72, and Asp123 each bind S-adenosyl-L-methionine; these read RD and ER.

It belongs to the methyltransferase superfamily. RsmJ family.

Its subcellular location is the cytoplasm. The enzyme catalyses guanosine(1516) in 16S rRNA + S-adenosyl-L-methionine = N(2)-methylguanosine(1516) in 16S rRNA + S-adenosyl-L-homocysteine + H(+). In terms of biological role, specifically methylates the guanosine in position 1516 of 16S rRNA. This Rhodopseudomonas palustris (strain HaA2) protein is Ribosomal RNA small subunit methyltransferase J.